The chain runs to 434 residues: Trigger factor (434 aa).

One can recognise a PPIase FKBP-type domain in the interval 161–246 (EDRVTIDFTG…LKKVEERELP (86 aa)).

This sequence belongs to the FKBP-type PPIase family. Tig subfamily.

It localises to the cytoplasm. The enzyme catalyses [protein]-peptidylproline (omega=180) = [protein]-peptidylproline (omega=0). Its function is as follows. Involved in protein export. Acts as a chaperone by maintaining the newly synthesized protein in an open conformation. Functions as a peptidyl-prolyl cis-trans isomerase. This Pectobacterium carotovorum subsp. carotovorum (strain PC1) protein is Trigger factor.